A 563-amino-acid chain; its full sequence is CDKN2A-interacting protein (563 aa).

Ala-2 carries the N-acetylalanine modification. The region spanning Val-19–Ser-126 is the XRN2-binding (XTBD) domain. 2 disordered regions span residues Gly-122–Ser-289 and Ser-304–Leu-351. The residue at position 124 (Ser-124) is a Phosphoserine. Over residues Val-147–Arg-160 the composition is skewed to basic and acidic residues. Composition is skewed to low complexity over residues Ser-168 to Val-216 and Ser-234 to Ser-248. Lys-177 is covalently cross-linked (Glycyl lysine isopeptide (Lys-Gly) (interchain with G-Cter in SUMO1)). A Phosphoserine modification is found at Ser-234. Polar residues predominate over residues His-249–Ser-262. The segment covering Gly-270 to Ser-280 has biased composition (low complexity). Position 340 is a phosphothreonine (Thr-340). A Phosphoserine modification is found at Ser-371. The region spanning Asn-445 to Lys-520 is the DRBM domain.

The protein belongs to the CARF family. As to quaternary structure, interacts with CDKN2A/p14ARF, p53/TP53 and MDM2. Interacts with CHEK2 and MAPK3. Interacts with XRN2. In terms of processing, may be ubiquitinated.

The protein localises to the nucleus. It localises to the nucleoplasm. Functionally, regulates DNA damage response and cell proliferation in a dose-dependent manner through a number of signaling pathways involved in cell proliferation, apoptosis and senescence. This is CDKN2A-interacting protein (Cdkn2aip) from Mus musculus (Mouse).